Here is a 110-residue protein sequence, read N- to C-terminus: Large ribosomal subunit protein uL22 (110 aa).

The protein belongs to the universal ribosomal protein uL22 family. As to quaternary structure, part of the 50S ribosomal subunit.

This protein binds specifically to 23S rRNA; its binding is stimulated by other ribosomal proteins, e.g. L4, L17, and L20. It is important during the early stages of 50S assembly. It makes multiple contacts with different domains of the 23S rRNA in the assembled 50S subunit and ribosome. Its function is as follows. The globular domain of the protein is located near the polypeptide exit tunnel on the outside of the subunit, while an extended beta-hairpin is found that lines the wall of the exit tunnel in the center of the 70S ribosome. The chain is Large ribosomal subunit protein uL22 from Klebsiella pneumoniae (strain 342).